The sequence spans 564 residues: Periplasmic [NiFe] hydrogenase large subunit (564 aa).

Positions 72, 75, 543, and 546 each coordinate Ni(2+). Positions 550–564 (VIEPETNEILKFKVC) are excised as a propeptide.

It belongs to the [NiFe]/[NiFeSe] hydrogenase large subunit family. In terms of assembly, heterodimer of a large and a small subunit. Ni(2+) serves as cofactor.

The protein localises to the periplasm. It carries out the reaction 2 Fe(III)-[cytochrome c3] + H2 = 2 Fe(II)-[cytochrome c3] + 2 H(+). In Solidesulfovibrio fructosivorans (Desulfovibrio fructosivorans), this protein is Periplasmic [NiFe] hydrogenase large subunit (hydB).